The following is a 156-amino-acid chain: ATP synthase subunit b (156 aa).

Residues 7-27 (LIVQMLVFVVFIGLTMKFIWP) form a helical membrane-spanning segment.

The protein belongs to the ATPase B chain family. In terms of assembly, F-type ATPases have 2 components, F(1) - the catalytic core - and F(0) - the membrane proton channel. F(1) has five subunits: alpha(3), beta(3), gamma(1), delta(1), epsilon(1). F(0) has three main subunits: a(1), b(2) and c(10-14). The alpha and beta chains form an alternating ring which encloses part of the gamma chain. F(1) is attached to F(0) by a central stalk formed by the gamma and epsilon chains, while a peripheral stalk is formed by the delta and b chains.

The protein localises to the cell inner membrane. F(1)F(0) ATP synthase produces ATP from ADP in the presence of a proton or sodium gradient. F-type ATPases consist of two structural domains, F(1) containing the extramembraneous catalytic core and F(0) containing the membrane proton channel, linked together by a central stalk and a peripheral stalk. During catalysis, ATP synthesis in the catalytic domain of F(1) is coupled via a rotary mechanism of the central stalk subunits to proton translocation. Functionally, component of the F(0) channel, it forms part of the peripheral stalk, linking F(1) to F(0). This is ATP synthase subunit b from Coxiella burnetii (strain CbuK_Q154) (Coxiella burnetii (strain Q154)).